A 421-amino-acid chain; its full sequence is Carboxypeptidase A4 (421 aa).

Residues 1–16 (MRWILFIGALIGSSIC) form the signal peptide. The propeptide at 17–113 (GQEKFFGDQV…EMQHNEGQER (97 aa)) is activation peptide. Positions 69, 71, 119, 123, 124, 125, 127, and 163 each coordinate a protein. Residues 122–416 (AYHSLEAIYH…LGLKTIMEHV (295 aa)) enclose the Peptidase M14 domain. 2 residues coordinate Zn(2+): histidine 181 and glutamate 184. Residues arginine 196, lysine 197, and serine 248 each contribute to the a protein site. An intrachain disulfide couples cysteine 250 to cysteine 273. The N-linked (GlcNAc...) asparagine glycan is linked to asparagine 260. Residue aspartate 270 coordinates a protein. A Zn(2+)-binding site is contributed by histidine 308. The Proton donor/acceptor role is filled by glutamate 382.

The protein belongs to the peptidase M14 family. As to quaternary structure, monomer. Interacts with LXN. Requires Zn(2+) as cofactor. In terms of tissue distribution, fetal expression in the adrenal gland, brain, heart, intestine, kidney, liver and lung. Except for fetal brain that shows no imprinting, expression was found preferentially from the maternal allele.

It is found in the secreted. With respect to regulation, inhibited by interaction with the metallocarboxypeptidase inhibitor (MCPI) from N.versicolor that binds to the catalytic zinc ion. Also inhibited by interaction with the S.magnifica carboxypeptidase inhibitor SmCI that penetrates the active site groove and inhibits activity by emulating a C-terminal substrate. Additionally inhibited by a carboxypeptidase inhibitor from H.medicinalis (leech) and R.bursa (tick). Functionally, metalloprotease that cleaves hydrophobic C-terminal residues with a preference for -Phe, -Leu, -Ile, -Met, -Tyr and -Val. May function in peptide hormone and/or neuropeptide catabolism. The polypeptide is Carboxypeptidase A4 (CPA4) (Homo sapiens (Human)).